Consider the following 369-residue polypeptide: Molybdenum import ATP-binding protein ModC (369 aa).

The region spanning 7 to 243 is the ABC transporter domain; the sequence is PGQAGIHARF…LDLPMAMTDD (237 aa). 41–48 provides a ligand contact to ATP; the sequence is GQSGSGKT. The Mop domain maps to 304-369; it reads EGSILNVLAV…AQIKAVSLLA (66 aa).

This sequence belongs to the ABC transporter superfamily. Molybdate importer (TC 3.A.1.8) family. As to quaternary structure, the complex is composed of two ATP-binding proteins (ModC), two transmembrane proteins (ModB) and a solute-binding protein (ModA).

It localises to the cell inner membrane. It carries out the reaction molybdate(out) + ATP + H2O = molybdate(in) + ADP + phosphate + H(+). In terms of biological role, part of the ABC transporter complex ModABC involved in molybdenum import. Responsible for energy coupling to the transport system. The sequence is that of Molybdenum import ATP-binding protein ModC from Bordetella bronchiseptica (strain ATCC BAA-588 / NCTC 13252 / RB50) (Alcaligenes bronchisepticus).